A 319-amino-acid chain; its full sequence is tRNA-cytidine(32) 2-sulfurtransferase (319 aa).

The short motif at S45–S50 is the PP-loop motif element. The [4Fe-4S] cluster site is built by C120, C123, and C211.

It belongs to the TtcA family. In terms of assembly, homodimer. Mg(2+) is required as a cofactor. The cofactor is [4Fe-4S] cluster.

It localises to the cytoplasm. The catalysed reaction is cytidine(32) in tRNA + S-sulfanyl-L-cysteinyl-[cysteine desulfurase] + AH2 + ATP = 2-thiocytidine(32) in tRNA + L-cysteinyl-[cysteine desulfurase] + A + AMP + diphosphate + H(+). It participates in tRNA modification. In terms of biological role, catalyzes the ATP-dependent 2-thiolation of cytidine in position 32 of tRNA, to form 2-thiocytidine (s(2)C32). The sulfur atoms are provided by the cysteine/cysteine desulfurase (IscS) system. This Shewanella woodyi (strain ATCC 51908 / MS32) protein is tRNA-cytidine(32) 2-sulfurtransferase.